We begin with the raw amino-acid sequence, 795 residues long: Lon protease 1 (795 aa).

The region spanning Leu-9–Leu-204 is the Lon N-terminal domain. Gly-360–Thr-367 contributes to the ATP binding site. The Lon proteolytic domain occupies Glu-596 to Pro-777. Catalysis depends on residues Ser-683 and Lys-726.

Belongs to the peptidase S16 family. In terms of assembly, homohexamer. Organized in a ring with a central cavity.

It is found in the cytoplasm. It catalyses the reaction Hydrolysis of proteins in presence of ATP.. In terms of biological role, ATP-dependent serine protease that mediates the selective degradation of mutant and abnormal proteins as well as certain short-lived regulatory proteins. Required for cellular homeostasis and for survival from DNA damage and developmental changes induced by stress. Degrades polypeptides processively to yield small peptide fragments that are 5 to 10 amino acids long. Binds to DNA in a double-stranded, site-specific manner. In Thermus thermophilus (strain ATCC BAA-163 / DSM 7039 / HB27), this protein is Lon protease 1.